Consider the following 325-residue polypeptide: Glutarate 2-hydroxylase (325 aa).

Fe cation contacts are provided by His160, Asp162, and His292.

It belongs to the glutarate hydroxylase family. As to quaternary structure, homotetramer. The cofactor is Fe(2+).

It carries out the reaction glutarate + 2-oxoglutarate + O2 = (S)-2-hydroxyglutarate + succinate + CO2. The protein operates within amino-acid degradation. Functionally, acts as an alpha-ketoglutarate-dependent dioxygenase catalyzing hydroxylation of glutarate (GA) to L-2-hydroxyglutarate (L2HG). Functions in a L-lysine degradation pathway that proceeds via cadaverine, glutarate and L-2-hydroxyglutarate. In Escherichia fergusonii (strain ATCC 35469 / DSM 13698 / CCUG 18766 / IAM 14443 / JCM 21226 / LMG 7866 / NBRC 102419 / NCTC 12128 / CDC 0568-73), this protein is Glutarate 2-hydroxylase.